We begin with the raw amino-acid sequence, 298 residues long: Probable endonuclease 4 (298 aa).

Residues H69, H111, E146, D180, H183, H215, D228, H230, and E260 each coordinate Zn(2+).

The protein belongs to the AP endonuclease 2 family. Requires Zn(2+) as cofactor.

It carries out the reaction Endonucleolytic cleavage to 5'-phosphooligonucleotide end-products.. Endonuclease IV plays a role in DNA repair. It cleaves phosphodiester bonds at apurinic or apyrimidinic (AP) sites, generating a 3'-hydroxyl group and a 5'-terminal sugar phosphate. This Bacillus mycoides (strain KBAB4) (Bacillus weihenstephanensis) protein is Probable endonuclease 4.